A 517-amino-acid chain; its full sequence is Histone H4 transcription factor (517 aa).

C2H2-type zinc fingers lie at residues 15 to 39 (LQCE…VTQH), 129 to 153 (FLCL…VEAH), and 169 to 193 (VLCG…LRSH). The segment at 199–221 (VACPTCGGMFANNTKFLDHIRRQ) adopts a C2H2-type 4; degenerate zinc-finger fold. C2H2-type zinc fingers lie at residues 229-251 (FQCS…MRNH), 255-278 (YKCP…RFRH), 284-306 (FKCD…LDTH), 312-337 (YRCD…RKVH), and 345-368 (YKCH…RKKH). The tract at residues 373–517 (PSGHPRFRYK…IAEEPEIQMV (145 aa)) is interaction with NPAT. A required for activation of histone H4 transcription and contributes to DNA-binding region spans residues 374–407 (SGHPRFRYKEHEDGYMRLQLVRYESVELTQQLLR). The disordered stretch occupies residues 431–460 (TVPGEPGRKEEEEEGKGSEGTALSASQDNP). The span at 451-460 (TALSASQDNP) shows a compositional bias: polar residues.

Binds MBD2 and a histone deacetylase complex. Interacts with NPAT. Post-translationally, ubiquitinated. Ubiquitination may lead to proteasome-mediated degradation. As to expression, ubiquitous. Highly expressed in brain, heart, skeletal muscle, spleen, kidney, small intestine, placenta and liver.

Its subcellular location is the nucleus. Transcriptional repressor that binds to the consensus sequence 5'-CGGACGTT-3' and to the RB1 promoter. Transcriptional activator that promotes histone H4 gene transcription at the G1/S phase transition in conjunction with NPAT. Also activates transcription of the ATM and PRKDC genes. Autoregulates its expression by associating with its own promoter. The sequence is that of Histone H4 transcription factor (HINFP) from Homo sapiens (Human).